Here is a 382-residue protein sequence, read N- to C-terminus: Anhydro-N-acetylmuramic acid kinase (382 aa).

Residue glycine 9–aspartate 16 participates in ATP binding.

Belongs to the anhydro-N-acetylmuramic acid kinase family.

It carries out the reaction 1,6-anhydro-N-acetyl-beta-muramate + ATP + H2O = N-acetyl-D-muramate 6-phosphate + ADP + H(+). Its pathway is amino-sugar metabolism; 1,6-anhydro-N-acetylmuramate degradation. It functions in the pathway cell wall biogenesis; peptidoglycan recycling. Functionally, catalyzes the specific phosphorylation of 1,6-anhydro-N-acetylmuramic acid (anhMurNAc) with the simultaneous cleavage of the 1,6-anhydro ring, generating MurNAc-6-P. Is required for the utilization of anhMurNAc either imported from the medium or derived from its own cell wall murein, and thus plays a role in cell wall recycling. The chain is Anhydro-N-acetylmuramic acid kinase from Bacillus cereus (strain 03BB102).